Here is a 1106-residue protein sequence, read N- to C-terminus: Platelet-derived growth factor receptor beta (1106 aa).

Positions 1–32 (MRLPGAMPALALKGELLLLSLLLLLEPQISQG) are cleaved as a signal peptide. Ig-like C2-type domains are found at residues 33–120 (LVVT…YIFV), 129–210 (PNDA…YRLQ), 214–309 (INVS…INIT), 331–403 (HRSR…HEDA), and 416–524 (PVRV…VIVV). Over 33–532 (LVVTPPGPEL…VVPHSLPFKV (500 aa)) the chain is Extracellular. 3 N-linked (GlcNAc...) asparagine glycosylation sites follow: N45, N89, and N103. Cysteines 54 and 100 form a disulfide. C149 and C190 are joined by a disulfide. N-linked (GlcNAc...) asparagine glycosylation is found at N215 and N230. A disulfide bridge links C235 with C291. Residues N292, N307, N354, N371, N468, and N479 are each glycosylated (N-linked (GlcNAc...) asparagine). A disulfide bridge links C436 with C508. A helical transmembrane segment spans residues 533–553 (VVISAILALVVLTIISLIILI). The Cytoplasmic segment spans residues 554–1106 (MLWQKKPRYE…PRAEAEDSFL (553 aa)). Phosphotyrosine; by autocatalysis occurs at positions 562, 579, and 581. Residues 600-962 (LVLGRTLGSG…QLVLLLERLL (363 aa)) form the Protein kinase domain. ATP is bound by residues 606-614 (LGSGAFGQV) and K634. Residue Y686 is modified to Phosphotyrosine; by ABL1 and ABL2. 7 positions are modified to phosphotyrosine; by autocatalysis: Y716, Y740, Y751, Y763, Y771, Y775, and Y778. The Proton acceptor role is filled by D826. Position 857 is a phosphotyrosine; by autocatalysis (Y857). Phosphotyrosine; by ABL1 and ABL2 occurs at positions 934 and 970. Phosphotyrosine; by autocatalysis is present on residues Y1009 and Y1021. The segment at 1019–1106 (NDYIIPLPDP…PRAEAEDSFL (88 aa)) is disordered. Residues 1043–1060 (SLASSTLNEVNTSSTISC) show a composition bias toward polar residues. A compositionally biased stretch (acidic residues) spans 1066–1088 (PQDEPEPEPQLELQVEPEPELEQ).

This sequence belongs to the protein kinase superfamily. Tyr protein kinase family. CSF-1/PDGF receptor subfamily. In terms of assembly, interacts with homodimeric PDGFB and PDGFD, and with heterodimers formed by PDGFA and PDGFB. May also interact with homodimeric PDGFC. Monomer in the absence of bound ligand. Interaction with homodimeric PDGFB, heterodimers formed by PDGFA and PDGFB or homodimeric PDGFD, leads to receptor dimerization, where both PDGFRA homodimers and heterodimers with PDGFRB are observed. Interacts with SH2B2/APS. Interacts directly (tyrosine phosphorylated) with SHB. Interacts (tyrosine phosphorylated) with PIK3R1 and RASA1. Interacts (tyrosine phosphorylated) with CBL. Interacts (tyrosine phosphorylated) with SRC and SRC family kinases. Interacts (tyrosine phosphorylated) with PIK3C2B, maybe indirectly. Interacts (tyrosine phosphorylated) with SHC1, GRB7, GRB10 and NCK1. Interaction with GRB2 is mediated by SHC1. Interacts (via C-terminus) with NHERF1. Autophosphorylated on tyrosine residues upon ligand binding. Autophosphorylation occurs in trans, i.e. one subunit of the dimeric receptor phosphorylates tyrosine residues on the other subunit. Phosphorylation at Tyr-579, and to a lesser degree, at Tyr-581, is important for interaction with SRC family kinases. Phosphorylation at Tyr-740 and Tyr-751 is important for interaction with PIK3R1. Phosphorylation at Tyr-751 is important for interaction with NCK1. Phosphorylation at Tyr-771 and Tyr-857 is important for interaction with RASA1/GAP. Phosphorylation at Tyr-857 is important for efficient phosphorylation of PLCG1 and PTPN11, resulting in increased phosphorylation of AKT1, MAPK1/ERK2 and/or MAPK3/ERK1, PDCD6IP/ALIX and STAM, and in increased cell proliferation. Phosphorylation at Tyr-1009 is important for interaction with PTPN11. Phosphorylation at Tyr-1009 and Tyr-1021 is important for interaction with PLCG1. Phosphorylation at Tyr-1021 is important for interaction with CBL; PLCG1 and CBL compete for the same binding site. Dephosphorylated by PTPRJ at Tyr-751, Tyr-857, Tyr-1009 and Tyr-1021. Dephosphorylated by PTPN2 at Tyr-579 and Tyr-1021. Post-translationally, N-glycosylated. In terms of processing, ubiquitinated. After autophosphorylation, the receptor is polyubiquitinated, leading to its degradation.

Its subcellular location is the cell membrane. It is found in the cytoplasmic vesicle. The protein resides in the lysosome lumen. The enzyme catalyses L-tyrosyl-[protein] + ATP = O-phospho-L-tyrosyl-[protein] + ADP + H(+). Its activity is regulated as follows. Present in an inactive conformation in the absence of bound ligand. Binding of PDGFB and/or PDGFD leads to dimerization and activation by autophosphorylation on tyrosine residues. Inhibited by imatinib. Tyrosine-protein kinase that acts as a cell-surface receptor for homodimeric PDGFB and PDGFD and for heterodimers formed by PDGFA and PDGFB, and plays an essential role in the regulation of embryonic development, cell proliferation, survival, differentiation, chemotaxis and migration. Plays an essential role in blood vessel development by promoting proliferation, migration and recruitment of pericytes and smooth muscle cells to endothelial cells. Plays a role in the migration of vascular smooth muscle cells and the formation of neointima at vascular injury sites. Required for normal development of the cardiovascular system. Required for normal recruitment of pericytes (mesangial cells) in the kidney glomerulus, and for normal formation of a branched network of capillaries in kidney glomeruli. Promotes rearrangement of the actin cytoskeleton and the formation of membrane ruffles. Binding of its cognate ligands - homodimeric PDGFB, heterodimers formed by PDGFA and PDGFB or homodimeric PDGFD -leads to the activation of several signaling cascades; the response depends on the nature of the bound ligand and is modulated by the formation of heterodimers between PDGFRA and PDGFRB. Phosphorylates PLCG1, PIK3R1, PTPN11, RASA1/GAP, CBL, SHC1 and NCK1. Activation of PLCG1 leads to the production of the cellular signaling molecules diacylglycerol and inositol 1,4,5-trisphosphate, mobilization of cytosolic Ca(2+) and the activation of protein kinase C. Phosphorylation of PIK3R1, the regulatory subunit of phosphatidylinositol 3-kinase, leads to the activation of the AKT1 signaling pathway. Phosphorylation of SHC1, or of the C-terminus of PTPN11, creates a binding site for GRB2, resulting in the activation of HRAS, RAF1 and down-stream MAP kinases, including MAPK1/ERK2 and/or MAPK3/ERK1. Promotes phosphorylation and activation of SRC family kinases. Promotes phosphorylation of PDCD6IP/ALIX and STAM. Receptor signaling is down-regulated by protein phosphatases that dephosphorylate the receptor and its down-stream effectors, and by rapid internalization of the activated receptor. The chain is Platelet-derived growth factor receptor beta (PDGFRB) from Homo sapiens (Human).